A 266-amino-acid polypeptide reads, in one-letter code: Adaptin ear-binding coat-associated protein 2 (266 aa).

2 disordered regions span residues 165–198 (MRKKEGAAGTPRARPTSAGGLSLLPPPPGGKSST) and 245–266 (DFTKSTGSPSSQSQPGTGWVQF). Ser181 carries the post-translational modification Phosphoserine. 2 consecutive short sequence motifs (WXXF motif) follow at residues 243-246 (WGDF) and 263-266 (WVQF). The span at 249–266 (STGSPSSQSQPGTGWVQF) shows a compositional bias: low complexity.

This sequence belongs to the NECAP family. As to quaternary structure, interacts with AP1G1 and AP2A1 components of the adapter protein complexes AP-1 and AP-2. Interacts with the GAE domain proteins GGA1, GGA2 and GGA3. As to expression, expressed in brain, heart, kidney, liver, lung, skeletal muscles and testis (at protein level).

The protein resides in the cytoplasmic vesicle. The protein localises to the clathrin-coated vesicle membrane. Its subcellular location is the cell membrane. Involved in endocytosis. The polypeptide is Adaptin ear-binding coat-associated protein 2 (Necap2) (Mus musculus (Mouse)).